The sequence spans 295 residues: Acetaldehyde dehydrogenase 2 (295 aa).

17–20 (TGNI) contacts NAD(+). The Acyl-thioester intermediate role is filled by Cys132. NAD(+) contacts are provided by residues 164–172 (SVGPASRAN) and Asn275.

The protein belongs to the acetaldehyde dehydrogenase family.

It catalyses the reaction acetaldehyde + NAD(+) + CoA = acetyl-CoA + NADH + H(+). The sequence is that of Acetaldehyde dehydrogenase 2 from Salinispora arenicola (strain CNS-205).